We begin with the raw amino-acid sequence, 260 residues long: MISVKLVSYTNDGEKVIAIAAKMSRSRKGWDYHEKDMTDDEIETWIRDAILHGYWSVLEHSVYTFSIEEISRVASHQLVRHRIASYTQMSHRFAKPIDEYYKPIIPPSAKKRSKELVEKAYKEAYDNYYTLLESGVPEEDARYVLPNGVNTNIVVTMNARELYNFFSLRLCSRAQWEIRAIAWKMLEEVKKVHPRLFKYTGPNCIIHENFIRNENESITLEDIFKDYKLEFISQRCIEGVLRDGIKKCIINSRSVLDNIK.

A ThyX domain is found at 2–203 (ISVKLVSYTN…PRLFKYTGPN (202 aa)). FAD-binding positions include S56, 80–82 (RHR), and Q88. DUMP contacts are provided by residues 77–80 (QLVR), 88–92 (QMSHR), and R142. The ThyX motif signature appears at 80 to 90 (RHRIASYTQMS). FAD contacts are provided by residues 158–160 (NAR) and N164. DUMP is bound at residue R169. Catalysis depends on R169, which acts as the Involved in ionization of N3 of dUMP, leading to its activation.

The protein belongs to the thymidylate synthase ThyX family. In terms of assembly, homotetramer. It depends on FAD as a cofactor.

The enzyme catalyses dUMP + (6R)-5,10-methylene-5,6,7,8-tetrahydrofolate + NADPH + H(+) = dTMP + (6S)-5,6,7,8-tetrahydrofolate + NADP(+). It functions in the pathway pyrimidine metabolism; dTTP biosynthesis. Functionally, catalyzes the reductive methylation of 2'-deoxyuridine-5'-monophosphate (dUMP) to 2'-deoxythymidine-5'-monophosphate (dTMP) while utilizing 5,10-methylenetetrahydrofolate (mTHF) as the methyl donor, and NADPH and FADH(2) as the reductant. In Saccharolobus solfataricus (strain ATCC 35092 / DSM 1617 / JCM 11322 / P2) (Sulfolobus solfataricus), this protein is Flavin-dependent thymidylate synthase.